Consider the following 195-residue polypeptide: ATP-dependent Clp protease proteolytic subunit (195 aa).

Ser98 (nucleophile) is an active-site residue. The active site involves His123.

This sequence belongs to the peptidase S14 family. Fourteen ClpP subunits assemble into 2 heptameric rings which stack back to back to give a disk-like structure with a central cavity, resembling the structure of eukaryotic proteasomes.

It localises to the cytoplasm. The catalysed reaction is Hydrolysis of proteins to small peptides in the presence of ATP and magnesium. alpha-casein is the usual test substrate. In the absence of ATP, only oligopeptides shorter than five residues are hydrolyzed (such as succinyl-Leu-Tyr-|-NHMec, and Leu-Tyr-Leu-|-Tyr-Trp, in which cleavage of the -Tyr-|-Leu- and -Tyr-|-Trp bonds also occurs).. Its function is as follows. Cleaves peptides in various proteins in a process that requires ATP hydrolysis. Has a chymotrypsin-like activity. Plays a major role in the degradation of misfolded proteins. The polypeptide is ATP-dependent Clp protease proteolytic subunit (Sulfurovum sp. (strain NBC37-1)).